The chain runs to 623 residues: Leucine aminopeptidase 2 (623 aa).

A peptide-binding positions include 136 to 138 and 261 to 266; these read QCE and PYGGME. His290 serves as a coordination point for Zn(2+). Catalysis depends on Glu291, which acts as the Proton acceptor. Residues His294 and Glu313 each coordinate Zn(2+). The active-site Proton donor is the Tyr391.

It belongs to the peptidase M1 family. Requires Zn(2+) as cofactor.

It is found in the cytoplasm. It localises to the nucleus. It carries out the reaction an epoxide + H2O = an ethanediol. Functionally, aminopeptidase that preferentially cleaves di- and tripeptides. Also has low epoxide hydrolase activity (in vitro). Can hydrolyze the epoxide leukotriene LTA(4) but it forms preferentially 5,6-dihydroxy-7,9,11,14-eicosatetraenoic acid rather than the cytokine leukotriene B(4) as the product compared to the homologous mammalian enzyme (in vitro). In Candida albicans (strain SC5314 / ATCC MYA-2876) (Yeast), this protein is Leucine aminopeptidase 2 (LKH1).